We begin with the raw amino-acid sequence, 228 residues long: 7-cyano-7-deazaguanine synthase (228 aa).

8-18 serves as a coordination point for ATP; it reads LSGGLDSTTCL. Residues cysteine 188, cysteine 198, cysteine 201, and cysteine 204 each coordinate Zn(2+).

The protein belongs to the QueC family. It depends on Zn(2+) as a cofactor.

It catalyses the reaction 7-carboxy-7-deazaguanine + NH4(+) + ATP = 7-cyano-7-deazaguanine + ADP + phosphate + H2O + H(+). The protein operates within purine metabolism; 7-cyano-7-deazaguanine biosynthesis. Catalyzes the ATP-dependent conversion of 7-carboxy-7-deazaguanine (CDG) to 7-cyano-7-deazaguanine (preQ(0)). The polypeptide is 7-cyano-7-deazaguanine synthase (Legionella pneumophila (strain Paris)).